The following is a 383-amino-acid chain: Insecticidal crystal protein Cry35Ab1 (383 aa).

The 113-residue stretch at 26 to 138 (DDSGVSLMNK…NNPNQQWNLT (113 aa)) folds into the Ricin B-type lectin domain.

It belongs to the toxin_10 family. Monomer in solution. Copurifies from parasporal inclusion bodies with Cry34Ab1. Proteolytic processing occurs near the C-terminus yielding a stable protein of approximately 40 kDa; this may be the active form of the protein.

In terms of biological role, component of a binary insecticidal toxin active on western corn rootworm (WCR, Diabrotica virgifera subsp. virgifera Le Conte) and probably also on northern corn rootworm (D.barberi). Both proteins are required for maximal toxicity. The larval midgut epithelium is probably the primary target. This protein alone has no activity against southern corn rootworm (Diabrotica undecimpunctata howardi Barber), but it synergizes the toxic effect of its Cry34Ab1 partner. The 2 proteins individually and together form ion channels; channels made in the presence of the 2 proteins have higher conductance. Binds to WCR third instar midgut brush border membrane vesicles; binding improves over 10-fold in the presence of Cry34Ab1. The sequence is that of Insecticidal crystal protein Cry35Ab1 from Bacillus thuringiensis.